Reading from the N-terminus, the 463-residue chain is ATP synthase subunit beta (463 aa).

152-159 lines the ATP pocket; sequence GGAGVGKT.

It belongs to the ATPase alpha/beta chains family. In terms of assembly, F-type ATPases have 2 components, CF(1) - the catalytic core - and CF(0) - the membrane proton channel. CF(1) has five subunits: alpha(3), beta(3), gamma(1), delta(1), epsilon(1). CF(0) has three main subunits: a(1), b(2) and c(9-12). The alpha and beta chains form an alternating ring which encloses part of the gamma chain. CF(1) is attached to CF(0) by a central stalk formed by the gamma and epsilon chains, while a peripheral stalk is formed by the delta and b chains.

Its subcellular location is the cell membrane. It catalyses the reaction ATP + H2O + 4 H(+)(in) = ADP + phosphate + 5 H(+)(out). Its function is as follows. Produces ATP from ADP in the presence of a proton gradient across the membrane. The catalytic sites are hosted primarily by the beta subunits. This is ATP synthase subunit beta from Clostridium botulinum (strain Eklund 17B / Type B).